Reading from the N-terminus, the 735-residue chain is ATP-dependent DNA helicase Hel308 (735 aa).

Residues Q32 and 50–57 each bind ATP; that span reads APTGSGKT. The 165-residue stretch at 37 to 201 folds into the Helicase ATP-binding domain; sequence QAGVEKGENL…WIGGKIVESS (165 aa). Residues 146 to 149 carry the DEAH box motif; that stretch reads DEIH. One can recognise a Helicase C-terminal domain in the interval 235–431; the sequence is DLDLAAEAIE…GLRGLRHFIL (197 aa).

Belongs to the helicase family. Hel308 subfamily. In terms of assembly, monomer.

It catalyses the reaction Couples ATP hydrolysis with the unwinding of duplex DNA by translocating in the 3'-5' direction.. The catalysed reaction is ATP + H2O = ADP + phosphate + H(+). DNA-dependent ATPase and 3'-5' DNA helicase that may be involved in repair of stalled replication forks. The polypeptide is ATP-dependent DNA helicase Hel308 (Aeropyrum pernix (strain ATCC 700893 / DSM 11879 / JCM 9820 / NBRC 100138 / K1)).